A 122-amino-acid chain; its full sequence is Large ribosomal subunit protein uL14 (122 aa).

It belongs to the universal ribosomal protein uL14 family. Part of the 50S ribosomal subunit. Forms a cluster with proteins L3 and L19. In the 70S ribosome, L14 and L19 interact and together make contacts with the 16S rRNA in bridges B5 and B8.

In terms of biological role, binds to 23S rRNA. Forms part of two intersubunit bridges in the 70S ribosome. The chain is Large ribosomal subunit protein uL14 from Nitratiruptor sp. (strain SB155-2).